The chain runs to 336 residues: Holliday junction branch migration complex subunit RuvB (336 aa).

The interval 4–184 is large ATPase domain (RuvB-L); the sequence is ADRLISAASN…FGIVQRLEFY (181 aa). ATP-binding positions include isoleucine 23, arginine 24, glycine 65, lysine 68, threonine 69, threonine 70, 131–133, arginine 174, tyrosine 184, and arginine 221; that span reads EDY. A Mg(2+)-binding site is contributed by threonine 69. A small ATPAse domain (RuvB-S) region spans residues 185-255; sequence QVPDLQYIVG…VAAQALDMLN (71 aa). The head domain (RuvB-H) stretch occupies residues 258–336; the sequence is AEGFDYMDRK…HFGITPPEMP (79 aa). The DNA site is built by arginine 294, arginine 313, and arginine 318.

It belongs to the RuvB family. In terms of assembly, homohexamer. Forms an RuvA(8)-RuvB(12)-Holliday junction (HJ) complex. HJ DNA is sandwiched between 2 RuvA tetramers; dsDNA enters through RuvA and exits via RuvB. An RuvB hexamer assembles on each DNA strand where it exits the tetramer. Each RuvB hexamer is contacted by two RuvA subunits (via domain III) on 2 adjacent RuvB subunits; this complex drives branch migration. In the full resolvosome a probable DNA-RuvA(4)-RuvB(12)-RuvC(2) complex forms which resolves the HJ.

The protein localises to the cytoplasm. The enzyme catalyses ATP + H2O = ADP + phosphate + H(+). In terms of biological role, the RuvA-RuvB-RuvC complex processes Holliday junction (HJ) DNA during genetic recombination and DNA repair, while the RuvA-RuvB complex plays an important role in the rescue of blocked DNA replication forks via replication fork reversal (RFR). RuvA specifically binds to HJ cruciform DNA, conferring on it an open structure. The RuvB hexamer acts as an ATP-dependent pump, pulling dsDNA into and through the RuvAB complex. RuvB forms 2 homohexamers on either side of HJ DNA bound by 1 or 2 RuvA tetramers; 4 subunits per hexamer contact DNA at a time. Coordinated motions by a converter formed by DNA-disengaged RuvB subunits stimulates ATP hydrolysis and nucleotide exchange. Immobilization of the converter enables RuvB to convert the ATP-contained energy into a lever motion, pulling 2 nucleotides of DNA out of the RuvA tetramer per ATP hydrolyzed, thus driving DNA branch migration. The RuvB motors rotate together with the DNA substrate, which together with the progressing nucleotide cycle form the mechanistic basis for DNA recombination by continuous HJ branch migration. Branch migration allows RuvC to scan DNA until it finds its consensus sequence, where it cleaves and resolves cruciform DNA. The chain is Holliday junction branch migration complex subunit RuvB from Enterobacter sp. (strain 638).